Here is a 750-residue protein sequence, read N- to C-terminus: Cellulose synthase-like protein H1 (750 aa).

The next 2 membrane-spanning stretches (helical) occupy residues Leu-27 to Ala-47 and Ala-52 to Trp-72. Active-site residues include Asp-137 and Asp-459. 6 consecutive transmembrane segments (helical) span residues Val-537–Leu-557, Gly-570–Ile-590, Ile-608–Phe-628, Val-664–Trp-684, Gly-697–Leu-717, and Gly-727–Cys-747.

This sequence belongs to the glycosyltransferase 2 family. Plant cellulose synthase-like H subfamily.

The protein resides in the golgi apparatus membrane. Thought to be a Golgi-localized beta-glycan synthase that polymerize the backbones of noncellulosic polysaccharides (hemicelluloses) of plant cell wall. The sequence is that of Cellulose synthase-like protein H1 (CSLH1) from Oryza sativa subsp. japonica (Rice).